Here is a 193-residue protein sequence, read N- to C-terminus: NADH-quinone oxidoreductase subunit B (193 aa).

Positions 72, 73, 137, and 167 each coordinate [4Fe-4S] cluster.

The protein belongs to the complex I 20 kDa subunit family. In terms of assembly, NDH-1 is composed of 14 different subunits. Subunits NuoB, C, D, E, F, and G constitute the peripheral sector of the complex. Requires [4Fe-4S] cluster as cofactor.

It is found in the cell inner membrane. It catalyses the reaction a quinone + NADH + 5 H(+)(in) = a quinol + NAD(+) + 4 H(+)(out). NDH-1 shuttles electrons from NADH, via FMN and iron-sulfur (Fe-S) centers, to quinones in the respiratory chain. The immediate electron acceptor for the enzyme in this species is believed to be ubiquinone. Couples the redox reaction to proton translocation (for every two electrons transferred, four hydrogen ions are translocated across the cytoplasmic membrane), and thus conserves the redox energy in a proton gradient. In Bradyrhizobium sp. (strain ORS 278), this protein is NADH-quinone oxidoreductase subunit B.